We begin with the raw amino-acid sequence, 103 residues long: NAD(P)H-quinone oxidoreductase subunit 4L, organellar chromatophore (103 aa).

A run of 3 helical transmembrane segments spans residues isoleucine 3–leucine 23, valine 32–asparagine 52, and valine 63–leucine 83.

Belongs to the complex I subunit 4L family. In terms of assembly, NDH is composed of at least 16 different subunits, 5 of which are encoded in the nucleus.

It is found in the plastid. Its subcellular location is the organellar chromatophore thylakoid membrane. The catalysed reaction is a plastoquinone + NADH + (n+1) H(+)(in) = a plastoquinol + NAD(+) + n H(+)(out). It catalyses the reaction a plastoquinone + NADPH + (n+1) H(+)(in) = a plastoquinol + NADP(+) + n H(+)(out). In terms of biological role, NDH shuttles electrons from NAD(P)H:plastoquinone, via FMN and iron-sulfur (Fe-S) centers, to quinones in the photosynthetic chain and possibly in a chloroplast respiratory chain. The immediate electron acceptor for the enzyme in this species is believed to be plastoquinone. Couples the redox reaction to proton translocation, and thus conserves the redox energy in a proton gradient. The sequence is that of NAD(P)H-quinone oxidoreductase subunit 4L, organellar chromatophore from Paulinella chromatophora.